The following is a 580-amino-acid chain: NADH-ubiquinone oxidoreductase chain 5 (580 aa).

16 consecutive transmembrane segments (helical) span residues 12-32 (FYIL…FLLM), 50-70 (IVMT…VLLI), 92-112 (ILLV…PNLI), 113-133 (SILL…IYFQ), 153-173 (VALL…YIFY), 176-196 (MMKN…AAMT), 218-240 (SALV…FNIL), 249-269 (FLLL…NFEF), 274-294 (IIAL…SIGY), 300-320 (FHLL…GVII), 343-363 (CSCF…AGFY), 378-400 (NFFS…FRLV), 427-447 (IFFL…LMFF), 464-484 (MVCL…FFFI), 500-520 (MWFM…ILGM), and 560-580 (IYLL…LFLN).

Belongs to the complex I subunit 5 family.

It is found in the mitochondrion inner membrane. The catalysed reaction is a ubiquinone + NADH + 5 H(+)(in) = a ubiquinol + NAD(+) + 4 H(+)(out). Its function is as follows. Core subunit of the mitochondrial membrane respiratory chain NADH dehydrogenase (Complex I) that is believed to belong to the minimal assembly required for catalysis. Complex I functions in the transfer of electrons from NADH to the respiratory chain. The immediate electron acceptor for the enzyme is believed to be ubiquinone. The sequence is that of NADH-ubiquinone oxidoreductase chain 5 from Aedes aegypti (Yellowfever mosquito).